We begin with the raw amino-acid sequence, 471 residues long: 6-phosphogluconate dehydrogenase, decarboxylating (471 aa).

Residues 10-15 (GLAVMG), 33-35 (NRT), 75-77 (VKA), and asparagine 103 contribute to the NADP(+) site. Residues asparagine 103 and 129-131 (SGG) each bind substrate. The active-site Proton acceptor is lysine 183. 186–187 (HN) contacts substrate. Glutamate 190 acts as the Proton donor in catalysis. The substrate site is built by tyrosine 191, lysine 263, arginine 290, arginine 449, and histidine 455.

The protein belongs to the 6-phosphogluconate dehydrogenase family. As to quaternary structure, homodimer.

The catalysed reaction is 6-phospho-D-gluconate + NADP(+) = D-ribulose 5-phosphate + CO2 + NADPH. It functions in the pathway carbohydrate degradation; pentose phosphate pathway; D-ribulose 5-phosphate from D-glucose 6-phosphate (oxidative stage): step 3/3. Its function is as follows. Catalyzes the oxidative decarboxylation of 6-phosphogluconate to ribulose 5-phosphate and CO(2), with concomitant reduction of NADP to NADPH. This Synechococcus elongatus (strain ATCC 33912 / PCC 7942 / FACHB-805) (Anacystis nidulans R2) protein is 6-phosphogluconate dehydrogenase, decarboxylating (gnd).